A 671-amino-acid polypeptide reads, in one-letter code: Receptor-interacting serine/threonine-protein kinase 1 (671 aa).

The residue at position 6 (Ser-6) is a Phosphoserine; by IKKA and IKKB. Positions 17–289 (FLESAELDSG…GIEEKFRPFY (273 aa)) constitute a Protein kinase domain. Ser-20 is subject to Phosphoserine; by autocatalysis. ATP-binding positions include 23 to 31 (LDSGGFGKV) and Lys-45. A Phosphoserine; by IKKA and IKKB modification is found at Ser-25. Residue Asp-138 is the Proton acceptor of the active site. Residue Ser-161 is modified to Phosphoserine; by RIPK3 and autocatalysis. Ser-166 carries the phosphoserine; by autocatalysis modification. An interaction with SQSTM1 region spans residues 290–582 (LSQLEESVEE…QAIFDNTTSL (293 aa)). Ser-303 is modified (phosphoserine). A phosphoserine; by MAP3K7 mark is found at Ser-320, Ser-331, and Ser-333. Residues 331–348 (SRSNSATEQPGSLHSSQG) show a composition bias toward polar residues. Residues 331 to 354 (SRSNSATEQPGSLHSSQGLGMGPV) are disordered. Lys-377 participates in a covalent cross-link: Glycyl lysine isopeptide (Lys-Gly) (interchain with G-Cter in ubiquitin). Tyr-384 carries the phosphotyrosine modification. Positions 389 to 455 (SRMDRQTKQQ…GNAVHQPSGL (67 aa)) are disordered. Positions 428–444 (NFQNTEGKGTAYSSAAS) are enriched in polar residues. Positions 531-547 (YTIYNSTGIQIGAYNYM) match the RIP homotypic interaction motif (RHIM) motif. A Death domain is found at 583–669 (TDKHLDPIRE…DLLSSLIYVS (87 aa)). Arg-603 carries (Microbial infection) N-beta-linked (GlcNAc) arginine glycosylation.

This sequence belongs to the protein kinase superfamily. TKL Ser/Thr protein kinase family. In terms of assembly, homodimer. Interacts (via RIP homotypic interaction motif) with RIPK3 (via RIP homotypic interaction motif); this interaction induces RIPK1 phosphorylation and formation of a RIPK1-RIPK3 necroptosis-inducing complex. Upon TNF-induced necrosis, the RIPK1-RIPK3 dimer further interacts with PGAM5 and MLKL; the formation of this complex leads to PGAM5 phosphorylation and increase in PGAM5 phosphatase activity. Interacts (via the death domain) with TNFRSF6 (via the death domain) and TRADD (via the death domain). Is recruited by TRADD to TNFRSF1A in a TNF-dependent process. Binds RNF216, EGFR, IKBKG, TRAF1, TRAF2 and TRAF3. Interacts with BNLF1. Interacts with SQSTM1 upon TNF-alpha stimulation. May interact with MAVS/IPS1. Interacts with ZFAND5. Interacts with RBCK1. Interacts with ZBP1. Interacts with BIRC2/c-IAP1, BIRC3/c-IAP2 and XIAP/BIRC4. Interacts (via kinase domain) with DAB2IP (via Ras-GAP domain); the interaction occurs in a TNF-alpha-dependent manner. Interacts with ARHGEF2. Interacts (via protein kinase domain) with RFFL; involved in RIPK1 ubiquitination. Interacts with RNF34; involved in RIPK1 ubiquitination. Interacts with TICAM1 and this interaction is enhanced in the presence of WDFY1. Interacts with PELI1. Interacts (via death domain) with CRADD (via death domain); the interaction is direct. Component of complex IIa composed of at least RIPK1, FADD and CASP8. Component of the AIM2 PANoptosome complex, a multiprotein complex that drives inflammatory cell death (PANoptosis). Interacts with MAP3K7, CFLAR, CASP8, FADD and NEMO. Interacts with TAX1BP1; this interaction negatively regulates RIPK1 ubiquitination. Interacts with GRB2. Interacts with DDX24; this interaction disrupts RLR signaling activation of IFN-dependent transcription factor IRF7. (Microbial infection) Interacts with mumps virus protein SH; this interaction inhibits downstream NF-kappa-B pathway activation. As to quaternary structure, (Microbial infection) Interacts with Murid herpesvirus 1 protein RIR1. In terms of assembly, (Microbial infection) Interacts (via RIP homotypic interaction motif) with herpes simplex virus 1/HHV-1 protein RIR1/ICP6 (via RIP homotypic interaction motif); this interaction prevents necroptosis activation. (Microbial infection) Interacts (via RIP homotypic interaction motif) with herpes simplex virus 2/HHV-2 protein RIR1/ICP10 (via RIP homotypic interaction motif); this interaction prevents necroptosis activation. Post-translationally, (Microbial infection) Proteolytically cleaved by S.flexneri OspD3 within the RIP homotypic interaction motif (RHIM), leading to its degradation and inhibition of necroptosis. Proteolytically cleaved by CASP8 at Asp-324. Cleavage is crucial for limiting TNF-induced apoptosis, necroptosis and inflammatory response. Cleavage abolishes NF-kappa-B activation and enhances the interaction of TRADD with FADD. Proteolytically cleaved by CASP6 during intrinsic apoptosis. In terms of processing, RIPK1 and RIPK3 undergo reciprocal auto- and trans-phosphorylation. Phosphorylation of Ser-161 by RIPK3 is necessary for the formation of the necroptosis-inducing complex. Phosphorylation at Ser-25 represses its kinase activity and consequently prevents TNF-mediated RIPK1-dependent cell death. Phosphorylated at Ser-320 by MAP3K7 which requires prior ubiquitination with 'Lys-63'-linked chains by BIRC2/c-IAP1 and BIRC3/c-IAP2. This phosphorylation positively regulates RIPK1 interaction with RIPK3 to promote necroptosis but negatively regulates RIPK1 kinase activity and its interaction with FADD to mediate apoptosis. Post-translationally, deubiquitinated by USP7; this modification is required for TNF-alpha-induced apoptosis. Ubiquitinated with 'Lys-11'-, 'Lys-48'-, 'Lys-63'- and linear-linked type ubiquitin. Polyubiquitination with 'Lys-63'-linked chains by TRAF2 induces association with the IKK complex. Deubiquitination of 'Lys-63'-linked chains and polyubiquitination with 'Lys-48'-linked chains by TNFAIP3 leads to RIPK1 proteasomal degradation and consequently down-regulates TNF-alpha-induced NF-kappa-B signaling. 'Lys-48'-linked polyubiquitination by RFFL or RNF34 also promotes proteasomal degradation and negatively regulates TNF-alpha-induced NF-kappa-B signaling. Linear polyubiquitinated; the head-to-tail linear polyubiquitination ('Met-1'-linked) is mediated by the LUBAC complex and decreases protein kinase activity. Deubiquitination of linear polyubiquitin by CYLD promotes the kinase activity. Polyubiquitinated with 'Lys-48' and 'Lys-63'-linked chains by BIRC2/c-IAP1 and BIRC3/c-IAP2, leading to activation of NF-kappa-B. Ubiquitinated with 'Lys-63'-linked chains by PELI1. Ubiquitination at Lys-377 with 'Lys-63'-linked chains by BIRC2/c-IAP1 and BIRC3/c-IAP2 is essential for its phosphorylation at Ser-320 mediated by MAP3K7. This ubiquitination is required for NF-kB activation, suppresses RIPK1 kinase activity and plays a critical role in preventing cell death during embryonic development. In terms of processing, (Microbial infection) Glycosylated at Arg-603 by enteropathogenic E.coli protein NleB1: arginine GlcNAcylation prevents homotypic/heterotypic death domain interactions.

The protein resides in the cytoplasm. It is found in the cell membrane. The enzyme catalyses L-seryl-[protein] + ATP = O-phospho-L-seryl-[protein] + ADP + H(+). It carries out the reaction L-threonyl-[protein] + ATP = O-phospho-L-threonyl-[protein] + ADP + H(+). Its activity is regulated as follows. Serine-threonine kinase activity is inhibited by linear polyubiquitination ('Met-1'-linked) by the LUBAC complex. Inhibited by necrostatins, including necrostatin-1, necrostatin-3 and necrostatin-4. In terms of biological role, serine-threonine kinase which is a key regulator of TNF-mediated apoptosis, necroptosis and inflammatory pathways. Exhibits kinase activity-dependent functions that regulate cell death and kinase-independent scaffold functions regulating inflammatory signaling and cell survival. Has kinase-independent scaffold functions: upon binding of TNF to TNFR1, RIPK1 is recruited to the TNF-R1 signaling complex (TNF-RSC also known as complex I) where it acts as a scaffold protein promoting cell survival, in part, by activating the canonical NF-kappa-B pathway. Kinase activity is essential to regulate necroptosis and apoptosis, two parallel forms of cell death: upon activation of its protein kinase activity, regulates assembly of two death-inducing complexes, namely complex IIa (RIPK1-FADD-CASP8), which drives apoptosis, and the complex IIb (RIPK1-RIPK3-MLKL), which drives necroptosis. RIPK1 is required to limit CASP8-dependent TNFR1-induced apoptosis. In normal conditions, RIPK1 acts as an inhibitor of RIPK3-dependent necroptosis, a process mediated by RIPK3 component of complex IIb, which catalyzes phosphorylation of MLKL upon induction by ZBP1. Inhibits RIPK3-mediated necroptosis via FADD-mediated recruitment of CASP8, which cleaves RIPK1 and limits TNF-induced necroptosis. Required to inhibit apoptosis and necroptosis during embryonic development: acts by preventing the interaction of TRADD with FADD thereby limiting aberrant activation of CASP8. In addition to apoptosis and necroptosis, also involved in inflammatory response by promoting transcriptional production of pro-inflammatory cytokines, such as interleukin-6 (IL6). Phosphorylates RIPK3: RIPK1 and RIPK3 undergo reciprocal auto- and trans-phosphorylation. Phosphorylates DAB2IP at 'Ser-728' in a TNF-alpha-dependent manner, and thereby activates the MAP3K5-JNK apoptotic cascade. Required for ZBP1-induced NF-kappa-B activation in response to DNA damage. This Homo sapiens (Human) protein is Receptor-interacting serine/threonine-protein kinase 1.